The following is a 178-amino-acid chain: Protein GrpE (178 aa).

The protein belongs to the GrpE family. Homodimer.

Its subcellular location is the cytoplasm. In terms of biological role, participates actively in the response to hyperosmotic and heat shock by preventing the aggregation of stress-denatured proteins, in association with DnaK and GrpE. It is the nucleotide exchange factor for DnaK and may function as a thermosensor. Unfolded proteins bind initially to DnaJ; upon interaction with the DnaJ-bound protein, DnaK hydrolyzes its bound ATP, resulting in the formation of a stable complex. GrpE releases ADP from DnaK; ATP binding to DnaK triggers the release of the substrate protein, thus completing the reaction cycle. Several rounds of ATP-dependent interactions between DnaJ, DnaK and GrpE are required for fully efficient folding. The chain is Protein GrpE from Rickettsia africae (strain ESF-5).